Consider the following 3938-residue polypeptide: Protein bassoon (3938 aa).

The tract at residues 1-158 is disordered; that stretch reads MGNEASLEGG…PTSPYSVPQI (158 aa). Gly2 carries N-myristoyl glycine lipidation. Gly residues predominate over residues 9–29; the sequence is GGAGEGPLPPGGSGLGPGPGA. Residues 31–61 show a composition bias toward low complexity; the sequence is KPPSALAGGGQLPVAGAARAAGPPTPGLGLV. The segment at 62 to 70 is 4 X 2 AA tandem repeats of P-G; it reads PGPGPGPGP. Composition is skewed to polar residues over residues 86–98 and 127–154; these read QRAT…QASA and QVDS…SPYS. Position 142 is a phosphoserine (Ser142). Arg145 is subject to Omega-N-methylarginine. 2 C4-type zinc fingers span residues 167–190 and 195–217; these read CPIC…CTQC and CNQC…CLNC. Disordered stretches follow at residues 228-346 and 361-456; these read TTAP…LTGK and LMSV…KTMP. Positions 230–240 are enriched in polar residues; it reads APRSKSQQQLH. Phosphoserine is present on residues Ser241 and Ser245. Positions 361-376 are enriched in polar residues; it reads LMSVQPEADTQGQPSP. Pro residues predominate over residues 394 to 406; it reads PRPPGSGPGPGPT. 2 consecutive C4-type zinc fingers follow at residues 462-485 and 490-512; these read CPLC…CTAC and CTLC…CLNC. Disordered regions lie at residues 523 to 921, 934 to 1247, 1294 to 1541, and 1561 to 1611; these read GEPA…LQGG, GRLW…TPAG, MDPM…WQQS, and RMVH…RAPS. Over residues 526–539 the composition is skewed to pro residues; it reads APLPLPTPQEPPAG. Positions 548–589 are enriched in low complexity; it reads SPLKQKGPQGPGQPSGSLPPKASPQAAKASPQAAKASPQAKP. A run of 3 repeats spans residues 568–574, 575–581, and 582–588. Positions 568–588 are 3 X 7 AA tandem repeats of K-A-S-P-Q-A-[AK]; sequence KASPQAAKASPQAAKASPQAK. A compositionally biased stretch (pro residues) spans 616–629; the sequence is VPKPPPETAVPPGT. Residues 668-677 are compositionally biased toward polar residues; it reads QDLSRSPQSL. The span at 678–692 shows a compositional bias: low complexity; that stretch reads SDTGYSSDGVSSSQS. Over residues 693-702 the composition is skewed to polar residues; it reads EITGVVQQEV. Acidic residues-rich tracts occupy residues 769-784 and 847-858; these read FDSD…EDDS and SAEEDNLEEDDT. Arg863 carries the post-translational modification Omega-N-methylarginine. Position 965 is a phosphoserine (Ser965). Residues 979–996 are compositionally biased toward low complexity; the sequence is PASTPSYTSGTSPTSLSS. The stretch at 1032 to 1087 forms a coiled coil; the sequence is IEDSSEEEELREEEELLREQEKMREVEQQRIRSTARKTRRDKEELRAQRRRERSKT. Over residues 1034-1047 the composition is skewed to acidic residues; the sequence is DSSEEEELREEEEL. Residues Ser1035 and Ser1036 each carry the phosphoserine modification. The segment covering 1048 to 1061 has biased composition (basic and acidic residues); that stretch reads LREQEKMREVEQQR. Phosphoserine is present on Ser1085. At Thr1087 the chain carries Phosphothreonine. Residues Ser1093 and Ser1099 each carry the phosphoserine modification. Positions 1102-1117 are enriched in basic and acidic residues; the sequence is EELRQAAEMEELHRSS. 2 stretches are compositionally biased toward low complexity: residues 1118–1128 and 1158–1175; these read CSEYSPSPSLD and SPTE…SGRP. The stretch at 1176 to 1203 forms a coiled coil; that stretch reads LKSAEEAYEDMMRKAELLQRQQGQAAGA. A compositionally biased stretch (basic and acidic residues) spans 1177–1192; sequence KSAEEAYEDMMRKAEL. Positions 1194–1204 are enriched in low complexity; the sequence is QRQQGQAAGAR. The segment covering 1211-1224 has biased composition (polar residues); sequence SQPTGPRSQGSFEY. At Ser1221 the chain carries Phosphoserine. A compositionally biased stretch (low complexity) spans 1318-1328; sequence SFPTSTSSDSS. Thr1339 is a glycosylation site (O-linked (GlcNAc) threonine). Residues 1342–1351 are compositionally biased toward basic and acidic residues; sequence FAKEPQEPLK. Low complexity-rich tracts occupy residues 1352-1364 and 1374-1386; these read LHSS…LASK and PGTP…APCP. The O-linked (GlcNAc) threonine glycan is linked to Thr1380. Over residues 1402–1426 the composition is skewed to polar residues; that stretch reads SPSTSSTIHSYGQPPTTANYGSQTE. Phosphoserine occurs at positions 1470, 1479, and 1481. A compositionally biased stretch (low complexity) spans 1476-1487; sequence STPSESPTFSPS. Polar residues-rich tracts occupy residues 1496 to 1510 and 1561 to 1597; these read EFST…SSDI and RMVH…SQMP. An omega-N-methylarginine mark is found at Arg1780 and Arg1784. Residue Arg1794 is modified to Asymmetric dimethylarginine; alternate. Arg1794 bears the Omega-N-methylarginine; alternate mark. Position 1806 is an omega-N-methylarginine (Arg1806). Residues 1914-1964 are disordered; sequence PSAPDKSVTDAALPGQSSGPFYSPRDPEPPEPLTFRAQGVVGPGPHEEQRP. An O-linked (GlcNAc) threonine glycan is attached at Thr1922. Phosphoserine is present on residues Ser1978 and Ser2034. Residues Arg2039 and Arg2069 each carry the omega-N-methylarginine modification. 3 positions are modified to asymmetric dimethylarginine: Arg2243, Arg2253, and Arg2259. Residues 2280–2305 are disordered; the sequence is AAKASGAGGPPRPELPAGGAREEPLS. O-linked (GlcNAc) threonine glycosylation is present at Thr2307. Disordered regions lie at residues 2318–2343 and 2461–2486; these read VAQA…SGVL and EEQK…PPAA. Residues 2345–2470 are a coiled coil; it reads RPVMEKEEAS…EEQKQRQKAP (126 aa). O-linked (GlcNAc) threonine glycosylation is present at Thr2510. The disordered stretch occupies residues 2513–2648; sequence PGQAREPVLH…HEASASSSAA (136 aa). Positions 2527–2537 are enriched in polar residues; it reads SSASDMSLQTE. At Ser2564 the chain carries Phosphoserine. Phosphothreonine occurs at positions 2581 and 2608. Basic and acidic residues predominate over residues 2629–2641; that stretch reads RHSDSGSDSKHEA. Residue Thr2685 is glycosylated (O-linked (GlcNAc) threonine). The tract at residues 2715-3263 is interaction with DAO; the sequence is EPDGQAQGVA…GGVSGRPGKD (549 aa). Ser2796, Ser2845, and Ser2851 each carry phosphoserine. The interval 2839 to 2859 is disordered; it reads TLQRSLSDPKPLSPTAEESAK. The O-linked (GlcNAc) threonine glycan is linked to Thr2930. Positions 2933–2975 form a coiled coil; the sequence is SLLRELDRDLRLVEHESTKLRKKQAELDEEEKEIDAKLKYLEL. The interval 2934 to 2996 is sufficient for binding to ERC2; that stretch reads LLRELDRDLR…DRVGRDYPPL (63 aa). Residue Ser3007 is modified to Phosphoserine. Polar residues predominate over residues 3055-3068; sequence TQYTAGSSGPTQNG. 4 disordered regions span residues 3055-3148, 3162-3399, 3414-3546, and 3569-3910; these read TQYT…ADLE, AVTV…SRKF, QQRY…PRAH, and YHLG…VFSK. Basic and acidic residues predominate over residues 3184-3196; that stretch reads EHGKAPEHPRGGD. Positions 3198–3222 are enriched in polar residues; that stretch reads SSVSQSPAPTYPSDSHYTSLEQNVP. The residue at position 3286 (Ser3286) is a Phosphoserine. Over residues 3304-3315 the composition is skewed to polar residues; sequence ESNGRPASTHYY. Composition is skewed to basic and acidic residues over residues 3316 to 3328, 3358 to 3377, and 3450 to 3469; these read SDSD…RADK, QGME…KDVE, and LSSH…RETA. Ser3368 is modified (phosphoserine). Omega-N-methylarginine is present on Arg3488. Low complexity predominate over residues 3506-3520; sequence PLGRPRPAGGALPPG. 2 stretches are compositionally biased toward basic and acidic residues: residues 3535 to 3546 and 3578 to 3588; these read VQEHVKDGPRAH and WFDKPRDARSD. Residues 3638–3651 are compositionally biased toward basic residues; sequence EHRHHGDHGRHSGR. The span at 3652–3676 shows a compositional bias: basic and acidic residues; sequence HAGEEPGRRAARPHARDMGRHETRP. Low complexity predominate over residues 3751 to 3820; the sequence is PQQSQPPSSR…ARLQQQSQPT (70 aa). A coiled-coil region spans residues 3772-3803; that stretch reads QTQQQQQQQQQQQQQQQQQQQQQQQQGLGQQA. Omega-N-methylarginine is present on Arg3822. Positions 3834-3848 are enriched in pro residues; that stretch reads KPQPGPTTAPGPQPA. Composition is skewed to low complexity over residues 3860–3887 and 3894–3904; these read KPAA…KTGA and GAPAGQPAAEG.

Interacts with PCLO, ERC2/CAST1, RIMS1 and UNC13A. Interacts with TPRG1L. Interacts with DYNLL1 and DYNLL2; these interactions potentially link PTVs to dynein and myosin V motor complexes. Interacts with ATG5; this interaction is important for the regulation of presynaptic autophagy. Interacts (via C-terminus) with TRIO (via N-terminus). Interacts with CTBP1. Interacts with SIAH1; this interaction negatively regulates SIAH1 E3 ligase activity. Interacts (via coiled region) with DAO; the interaction is direct. Post-translationally, myristoylated. The N-terminal myristoylation is not sufficient for presynaptic localization. In terms of tissue distribution, detected at synapses in the stratum lucidum in the hippocampus CA3 region (at protein level).

The protein resides in the cytoplasm. Its subcellular location is the presynaptic active zone. The protein localises to the cytoskeleton. It is found in the cytoplasmic vesicle. It localises to the secretory vesicle. The protein resides in the synaptic vesicle membrane. Scaffold protein of the presynaptic cytomatrix at the active zone (CAZ) which is the place in the synapse where neurotransmitter is released. After synthesis, participates in the formation of Golgi-derived membranous organelles termed Piccolo-Bassoon transport vesicles (PTVs) that are transported along axons to sites of nascent synaptic contacts. At the presynaptic active zone, regulates the spatial organization of synaptic vesicle cluster, the protein complexes that execute membrane fusion and compensatory endocytosis. Also functions in processes other than assembly such as the regulation of specific presynaptic protein ubiquitination by interacting with SIAH1 or the regulation of presynaptic autophagy by associating with ATG5. Also mediates synapse to nucleus communication leading to reconfiguration of gene expression by associating with the transcriptional corepressor CTBP1 and by subsequently reducing the size of its pool available for nuclear import. Inhibits the activity of the proportion of DAO enzyme that localizes to the presynaptic active zone, which may modulate synaptic transmission. The chain is Protein bassoon from Rattus norvegicus (Rat).